Reading from the N-terminus, the 615-residue chain is Chaperone protein HscA homolog (615 aa).

This sequence belongs to the heat shock protein 70 family.

In terms of biological role, chaperone involved in the maturation of iron-sulfur cluster-containing proteins. Has a low intrinsic ATPase activity which is markedly stimulated by HscB. The sequence is that of Chaperone protein HscA homolog from Aeromonas hydrophila subsp. hydrophila (strain ATCC 7966 / DSM 30187 / BCRC 13018 / CCUG 14551 / JCM 1027 / KCTC 2358 / NCIMB 9240 / NCTC 8049).